The chain runs to 1780 residues: Chitin synthase Vb (1780 aa).

Residues Asn-133, Asn-153, Asn-629, Asn-644, Asn-655, and Asn-660 are each glycosylated (N-linked (GlcNAc...) asparagine). Helical transmembrane passes span 740 to 760 (AWIA…LKFI) and 776 to 796 (FVLF…IIGF). The region spanning 805–866 (NKAWNVKEVA…LSGMVMDNYF (62 aa)) is the Cytochrome b5 heme-binding domain. N-linked (GlcNAc...) asparagine glycosylation is found at Asn-888 and Asn-1009. A helical transmembrane segment spans residues 1046–1066 (LLLAFAIIICIVTAVKFLAAL). Asn-1411 is a glycosylation site (N-linked (GlcNAc...) asparagine). 3 consecutive transmembrane segments (helical) span residues 1442–1462 (LCGT…IYIL), 1469–1489 (IPYI…LIFI), and 1497–1517 (IGWM…LPLY). Asn-1524 is a glycosylation site (N-linked (GlcNAc...) asparagine). The interval 1649-1691 (TGVHDMRSQSPYQDYPGQHPSVSNLRGQANLSPATGGGHSRSG) is disordered. The segment covering 1668–1681 (PSVSNLRGQANLSP) has biased composition (polar residues). The 57-residue stretch at 1722-1778 (GPNDMAIVESIRSVLCEVDLDTVTKKQVRALVEQRLQTELVGERRTFMDRQIDHELE) folds into the DEK-C domain.

This sequence belongs to the chitin synthase family. Class VII subfamily.

It is found in the cell membrane. The catalysed reaction is [(1-&gt;4)-N-acetyl-beta-D-glucosaminyl](n) + UDP-N-acetyl-alpha-D-glucosamine = [(1-&gt;4)-N-acetyl-beta-D-glucosaminyl](n+1) + UDP + H(+). Functionally, polymerizes chitin, a structural polymer of the cell wall and septum, by transferring the sugar moiety of UDP-GlcNAc to the non-reducing end of the growing chitin polymer. ChsV and chsVb do perform additive, but not redundant, functions in septum formation. Functions not only in the maintenance of cell wall integrity under different osmotic conditions but also in polarized cell wall synthesis. Plays an important role in the complex infection process of this fungus. This Fusarium oxysporum f. sp. lycopersici (strain 4287 / CBS 123668 / FGSC 9935 / NRRL 34936) (Fusarium vascular wilt of tomato) protein is Chitin synthase Vb.